The following is a 468-amino-acid chain: Serine/threonine-protein kinase ULK3 (468 aa).

The Protein kinase domain maps to 13-269 (FILTEKLGSG…FIEFFAHLFV (257 aa)). ATP-binding positions include 19–27 (LGSGSYATV) and K43. D136 serves as the catalytic Proton acceptor. MIT domains follow at residues 279–347 (TLEK…KVLV) and 374–442 (RLFS…KEQM).

The protein belongs to the protein kinase superfamily. Ser/Thr protein kinase family. APG1/unc-51/ULK1 subfamily.

The protein localises to the cytoplasm. The enzyme catalyses L-seryl-[protein] + ATP = O-phospho-L-seryl-[protein] + ADP + H(+). It carries out the reaction L-threonyl-[protein] + ATP = O-phospho-L-threonyl-[protein] + ADP + H(+). Functionally, serine/threonine protein kinase that acts as a regulator of Sonic hedgehog (SHH) signaling and autophagy. The protein is Serine/threonine-protein kinase ULK3 (ulk3) of Xenopus laevis (African clawed frog).